We begin with the raw amino-acid sequence, 224 residues long: Ribosome maturation factor RimM (224 aa).

Residues 1–12 (MARRPGSSSRGP) are compositionally biased toward low complexity. Disordered regions lie at residues 1–46 (MARR…PSLV) and 204–224 (VADPPEDLFAPPGPKPADDPG). A PRC barrel domain is found at 137–211 (EDEFFLTDLI…KVVADPPEDL (75 aa)).

It belongs to the RimM family. In terms of assembly, binds ribosomal protein uS19.

It localises to the cytoplasm. Its function is as follows. An accessory protein needed during the final step in the assembly of 30S ribosomal subunit, possibly for assembly of the head region. Essential for efficient processing of 16S rRNA. May be needed both before and after RbfA during the maturation of 16S rRNA. It has affinity for free ribosomal 30S subunits but not for 70S ribosomes. The chain is Ribosome maturation factor RimM from Methylorubrum populi (strain ATCC BAA-705 / NCIMB 13946 / BJ001) (Methylobacterium populi).